Consider the following 358-residue polypeptide: MAPQNLGTLCLLLLYLLGAAIAGRDFYKILGVPRSASIKDIKKAYRKLALQLHPDRNPDDPRAQEKFQDLGAAYEVLSDSEKRKQYDTYGEEGLKDGHQSSHGDIFSHFFGDFGFMFGGTPRQQDRNIPRGSDIIVDLEVTLEEVYAGNFVEVVRNKPVARQAPGKRKCNCRQEMRTTQLGPGRFQMTQEVVCDECPNVKLVNEERTLEVEIEPGVRDGMEYPFIGEGEPHVDGEPGDLRFRIKVVKHPIFERRGDDLYTNVTISLVESLVGFDMDITHLDGHKVHISRDKITRPGAKLWKKGEGLPNFDNNNIKGSLIITFDVDFPKEQLTEEAREGIKQLLNQGSVQKVYNGLQGY.

The first 22 residues, 1–22, serve as a signal peptide directing secretion; that stretch reads MAPQNLGTLCLLLLYLLGAAIA. The 66-residue stretch at 25–90 folds into the J domain; the sequence is DFYKILGVPR…EKRKQYDTYG (66 aa). Position 188 is a phosphothreonine (Thr-188). Asn-261 is a glycosylation site (N-linked (GlcNAc...) asparagine).

As to quaternary structure, part of a large chaperone multiprotein complex comprising DNAJB11, HSP90B1, HSPA5, HYOU, PDIA2, PDIA4, PDIA6, PPIB, SDF2L1, UGGT1 and very small amounts of ERP29, but not, or at very low levels, CALR nor CANX. Binds to denatured substrates in an ATP-independent manner. Interacts via the J domain with HSPA5 in an ATP-dependent manner. Post-translationally, contains high-mannose Endo H-sensitive carbohydrates. Cys-169, Cys-171, Cys-193 and Cys-196 form intramolecular disulfide bonds. The preferential partner for each Cys is not known. Pancreas.

It localises to the endoplasmic reticulum lumen. Its function is as follows. As a co-chaperone for HSPA5 it is required for proper folding, trafficking or degradation of proteins. Binds directly to both unfolded proteins that are substrates for ERAD and nascent unfolded peptide chains, but dissociates from the HSPA5-unfolded protein complex before folding is completed. May help recruiting HSPA5 and other chaperones to the substrate. Stimulates HSPA5 ATPase activity. It is necessary for maturation and correct trafficking of PKD1. In Canis lupus familiaris (Dog), this protein is DnaJ homolog subfamily B member 11 (DNAJB11).